The primary structure comprises 57 residues: Potassium channel toxin alpha-KTx 1.5 (57 aa).

The signal sequence occupies residues 1–20 (MKISFLLLALVICSIGWSEA). Q21 carries the pyrrolidone carboxylic acid modification. 3 disulfides stabilise this stretch: C27–C48, C33–C53, and C37–C55.

Belongs to the short scorpion toxin superfamily. Potassium channel inhibitor family. Alpha-KTx 01 subfamily. As to expression, expressed by the venom gland.

The protein resides in the secreted. Its function is as follows. Potent blocker of both large-conductance calcium-activated potassium channels (KCa1.1/KCNMA1) and voltage-gated potassium channels (Kv1.3/KCNA3). Has also been shown to moderately inhibit Kv1.2/KCNA2 and weakly inhibit Kv1.1/KCNA1 channels, as well as 5-hydroxytryptamine 3 receptors (HTR3A). In Olivierus martensii (Manchurian scorpion), this protein is Potassium channel toxin alpha-KTx 1.5.